The primary structure comprises 1315 residues: Tetratricopeptide repeat protein 21B (1315 aa).

19 TPR repeats span residues 108 to 141 (RKALYHAGLFLWHIGRHDKAREYIDRMSKMPHDS), 145 to 178 (PILKAWLDITRGKEPYAKKALRYFEEGLQDGNDI), 192 to 225 (QNYSGALETVSQIIVNFPSFLPAFEKKMKLQLAL), 285 to 323 (AQLFYKITLAFSRTCGRNQLILQKVQSFLEKAFSLTPQQ), 324 to 357 (AEIATELGYQMILQGKVKEAWKWYRTAMTLNESN), 492 to 525 (PQAVFLMAKVKYLSGDTEAAYNNLQHCLEHSPSY), 563 to 596 (PLYHLIKAQSQKKMGEVAEAIKTLHMAMNLPGMR), 616 to 649 (LSIFLELVEVHRLNGEQHEAAKVLQDAIHEFSGT), 721 to 754 (PRSFLLLGDAYMNIQEPEEAIVAYEQALNQNPKD), 756 to 788 (TLARKIGKALVKTHNYSKAITYYEAALKSGQQN), 790 to 821 (LCYDLAELLLRLKLYEKAEKVLQHSLAHEPVS), 830 to 863 (GRSQVLLAKVYSKMERPSDAIAALQQARELQARI), 883 to 916 (AEICAEIAKHSAAQRDYEKAITFYREALVHCETD), 918 to 950 (KIMLELAQLYLAQEDLDASLRHCALLLQRDQDN), 951 to 984 (EPATMLMADLMFRKQDYEQAVYHLQQLLDRKPDN), 1022 to 1055 (PGFQYCKGLHFWYTGEPNDALRHFNKARKDSDWG), 1196 to 1229 (EKSWLLLADIYIQSAKYDMAEELLKRCLCHNRSC), 1231 to 1263 (KAYEYMGYIMEKEQAYTDAAFNYEMAWKHSNQT), and 1265 to 1298 (PAVGYKLAFNYLKAKRYVDAIDVCHQVLEAHPTY).

This sequence belongs to the TTC21 family. Component of the IFT complex A (IFT-A) complex. IFT-A complex is divided into a core subcomplex composed of IFT122:IFT140:WDR19 which is associated with TULP3 and a peripheral subcomplex composed of IFT43:WDR35:TTC21B. Interacts directy with WDR35 and TTC21B. Interacts with TTC25.

The protein localises to the cytoplasm. Its subcellular location is the cytoskeleton. It is found in the cilium axoneme. Functionally, component of the IFT complex A (IFT-A), a complex required for retrograde ciliary transport and entry into cilia of G protein-coupled receptors (GPCRs). Essential for retrograde trafficking of IFT-1, IFT-B and GPCRs. Negatively modulates the SHH signal transduction. The protein is Tetratricopeptide repeat protein 21B (Ttc21b) of Mus musculus (Mouse).